The sequence spans 476 residues: Glutamate--tRNA ligase (476 aa).

The short motif at 9-19 is the 'HIGH' region element; sequence PSPTGTLHLGT. The short motif at 248–252 is the 'KMSKS' region element; that stretch reads KLSKR. An ATP-binding site is contributed by Lys251.

Belongs to the class-I aminoacyl-tRNA synthetase family. Glutamate--tRNA ligase type 1 subfamily. As to quaternary structure, monomer.

It localises to the cytoplasm. It catalyses the reaction tRNA(Glu) + L-glutamate + ATP = L-glutamyl-tRNA(Glu) + AMP + diphosphate. Its function is as follows. Catalyzes the attachment of glutamate to tRNA(Glu) in a two-step reaction: glutamate is first activated by ATP to form Glu-AMP and then transferred to the acceptor end of tRNA(Glu). This is Glutamate--tRNA ligase from Prochlorococcus marinus (strain NATL2A).